The sequence spans 234 residues: Redox-sensing transcriptional repressor Rex (234 aa).

A DNA-binding region (H-T-H motif) is located at residues 17-56 (TYIRVLEELEAQNVLRASSGELARRAGVTPFQVRKDLTYF). Position 91 to 96 (91 to 96 (GMGRLG)) interacts with NAD(+).

The protein belongs to the transcriptional regulatory Rex family. In terms of assembly, homodimer.

The protein localises to the cytoplasm. Functionally, modulates transcription in response to changes in cellular NADH/NAD(+) redox state. The chain is Redox-sensing transcriptional repressor Rex from Deinococcus radiodurans (strain ATCC 13939 / DSM 20539 / JCM 16871 / CCUG 27074 / LMG 4051 / NBRC 15346 / NCIMB 9279 / VKM B-1422 / R1).